Reading from the N-terminus, the 161-residue chain is MYGNGPVFKAEGTSFRDQPYAEQLPQGLWTTGLCDCHEDAHICVQTAIMPCVSFAQNVEIVNRGTIPCMNAGLIHLALGFIGCSWLYAFPNRSRLREHFALPEEPCRDFLVHLFCTPCAICQESRELKNRGADPSIGWLSNVEKWSREKVTPPIVVPGMIR.

A helical transmembrane segment spans residues 71 to 89; sequence AGLIHLALGFIGCSWLYAF.

The protein belongs to the cornifelin family.

Its subcellular location is the membrane. In terms of biological role, may be involved in heavy metals transport. The chain is Protein PLANT CADMIUM RESISTANCE 12 (PCR12) from Arabidopsis thaliana (Mouse-ear cress).